The sequence spans 185 residues: Ribose 1,5-bisphosphate phosphokinase PhnN (185 aa).

It belongs to the ribose 1,5-bisphosphokinase family.

It carries out the reaction alpha-D-ribose 1,5-bisphosphate + ATP = 5-phospho-alpha-D-ribose 1-diphosphate + ADP. The protein operates within metabolic intermediate biosynthesis; 5-phospho-alpha-D-ribose 1-diphosphate biosynthesis; 5-phospho-alpha-D-ribose 1-diphosphate from D-ribose 5-phosphate (route II): step 3/3. Catalyzes the phosphorylation of ribose 1,5-bisphosphate to 5-phospho-D-ribosyl alpha-1-diphosphate (PRPP). This Escherichia coli (strain SMS-3-5 / SECEC) protein is Ribose 1,5-bisphosphate phosphokinase PhnN.